Consider the following 221-residue polypeptide: Histone H1.3 (221 aa).

The segment covering 1 to 17 (MSETAPLAPTIPAPAEK) has biased composition (low complexity). Residues 1-43 (MSETAPLAPTIPAPAEKTPVKKKAKKAGATAGKRKASGPPVSE) are disordered. Position 2 is an N-acetylserine (Ser2). At Ser2 the chain carries Phosphoserine. Position 17 is an N6-acetyllysine (Lys17). Thr18 bears the Phosphothreonine mark. Over residues 20-36 (VKKKAKKAGATAGKRKA) the composition is skewed to basic residues. N6-(beta-hydroxybutyryl)lysine occurs at positions 35, 47, and 53. The 74-residue stretch at 37–110 (SGPPVSELIT…GASGSFKLNK (74 aa)) folds into the H15 domain. Position 55 is a citrulline (Arg55). 4 positions are modified to N6-(beta-hydroxybutyryl)lysine: Lys65, Lys76, Lys86, and Lys91. The tract at residues 90–221 (SKGTLVQTKG…KAKKAAPKKK (132 aa)) is disordered. A Phosphoserine; by PKC modification is found at Ser105. An N6-(beta-hydroxybutyryl)lysine modification is found at Lys107. Basic residues-rich tracts occupy residues 120 to 141 (KAKKAGAAKPRKPAGAAKKPKK), 150 to 161 (KSIKKTPKKVKK), and 170 to 179 (KVAKSAKKVK). Lys170 bears the N6-(beta-hydroxybutyryl)lysine mark. Over residues 180 to 193 (TPQPKKAAKSPAKA) the composition is skewed to low complexity. The segment covering 194–221 (KAPKPKAAKPKSGKPKVTKAKKAAPKKK) has biased composition (basic residues).

This sequence belongs to the histone H1/H5 family. In terms of processing, H1 histones are progressively phosphorylated during the cell cycle, becoming maximally phosphorylated during late G2 phase and M phase, and being dephosphorylated sharply thereafter. Citrullination at Arg-55 (H1R54ci) by PADI4 takes place within the DNA-binding site of H1 and results in its displacement from chromatin and global chromatin decondensation, thereby promoting pluripotency and stem cell maintenance.

It is found in the nucleus. Its subcellular location is the chromosome. Functionally, histone H1 protein binds to linker DNA between nucleosomes forming the macromolecular structure known as the chromatin fiber. Histones H1 are necessary for the condensation of nucleosome chains into higher-order structured fibers. Also acts as a regulator of individual gene transcription through chromatin remodeling, nucleosome spacing and DNA methylation. This is Histone H1.3 from Homo sapiens (Human).